The following is a 234-amino-acid chain: MATHRKHLVRDFNRYITCSICRGYLIKPTAVTECLHTFCKSCIVQHFEESNECPECGIQVHETNPLEMLRLDKTLEEIIFKLVPGLREKEEHQESEFWRKHKIKSNGEDGPRAKKSRLSGEDDDGNGGDYHRSDPQIAICLDCLRNNGQSGESIVKGLMKKFIRCSTRVTVGTIKKFLCVKLKLPSSYELDVLCNGEIMGKDHTLEFIYRTRWRLQGDSAYPMVLEYRPRIDFG.

The segment at 18 to 57 adopts an RING-type zinc-finger fold; sequence CSICRGYLIKPTAVTECLHTFCKSCIVQHFEESNECPECG. Positions 97-130 are disordered; that stretch reads FWRKHKIKSNGEDGPRAKKSRLSGEDDDGNGGDY.

In terms of assembly, component of a PRC1-like complex.

The protein localises to the nucleus. Its function is as follows. Component of Polycomb group (PcG) multiprotein complexes; the complex class is required to maintain the transcriptionally repressive state of some genes. This Danio rerio (Zebrafish) protein is Polycomb group RING finger protein 5-A.